An 82-amino-acid polypeptide reads, in one-letter code: Large ribosomal subunit protein uL29 (82 aa).

Belongs to the universal ribosomal protein uL29 family.

This Trichodesmium erythraeum (strain IMS101) protein is Large ribosomal subunit protein uL29.